We begin with the raw amino-acid sequence, 315 residues long: Probable cytosolic iron-sulfur protein assembly protein CIAO1 homolog (315 aa).

WD repeat units follow at residues 11 to 50, 56 to 95, 100 to 139, 145 to 188, 189 to 229, 236 to 275, and 283 to 315; these read GHED…WVCK, GHQR…FESC, GHEN…EFEC, CHSQ…CTLD, KHAS…RSWE, RHPR…CSWR, and AHSQ…WQID.

The protein belongs to the WD repeat CIA1 family.

In terms of biological role, essential component of the cytosolic iron-sulfur (Fe/S) protein assembly machinery. Required for the maturation of extramitochondrial Fe/S proteins. The polypeptide is Probable cytosolic iron-sulfur protein assembly protein CIAO1 homolog (Ixodes scapularis (Black-legged tick)).